The primary structure comprises 790 residues: MAPSSKRKAINDDFITTISDNEADEFVEEEEVIQEEAPPKKKSKTIPKKKQKRSSKKASNDDDAEDEEDGHIEGVWGQNDDDDGAMDSDFEFVTGAGVEDLDDNPEFEGWGFDGAKKAMGQGNGVDLDEIIRRRREKKEGGTKGAAEPEAKAEEEGEALGLDDDDDEVLARDAFGMGAGSDDEDSAEASEGQDGSEASEGEEGDSDDESVASPVPHPDDDQESESEQDEDEEEAAKMKEFFAADEPKSDTNKGNASFQSMSLSRPILRGLTSVGFAKPTPIQSKTIPIALMGKDVVGGAVTGSGKTAAFVVPILERLLYRPKKVPTSRVVILAPTRELAIQCHAVATKLASHTDIKFCLAVGGLSLKVQESELRLRPDVIIATPGRFIDHMRNSASFAVDTVEILVLDEADRMLEDGFADELNEILTTLPKSRQTMLFSATMTSSVDNLIRVGLNKPVRLMVDSQKKTVVTLTQEFVRLRPGREEKRMGYLVYLCKNLYTERVIIFFRQKKIAHHARIIFGLLGLSCAELHGSMSQIQRIQSVEAFRDGKVSFLLATDLASRGLDIKGVDTVINYEAPQSLEIYVHRVGRTARAGRSGTAITLAAEPDRKVVKAAVKAGKAQGAKISSRIIDAADADSWQAKIDELEDEVEAVMREEKEEKVLAQADMEMRKGENMIRYEDDIKARPKRTWFETEKDKKAAREAGRAALNGVREALKKKHGGKNLSNKDKKKLDAMAEAKEARVWKKGAAERAGKGAVLNFKKDKSSKKGPVVGGRVAKKGAPRGKPRRR.

Residues 19 to 234 form a disordered region; it reads SDNEADEFVE…SEQDEDEEEA (216 aa). Over residues 21 to 34 the composition is skewed to acidic residues; sequence NEADEFVEEEEVIQ. The segment covering 40–56 has biased composition (basic residues); it reads KKKSKTIPKKKQKRSSK. Acidic residues-rich tracts occupy residues 61–70 and 79–90; these read DDDAEDEEDG and NDDDDGAMDSDF. Residues 137-153 are compositionally biased toward basic and acidic residues; the sequence is KKEGGTKGAAEPEAKAE. Composition is skewed to acidic residues over residues 154-167, 196-209, and 219-233; these read EEGE…DDDE, EASE…DDES, and DDQE…DEEE. The Q motif motif lies at 255–283; it reads ASFQSMSLSRPILRGLTSVGFAKPTPIQS. One can recognise a Helicase ATP-binding domain in the interval 286 to 460; the sequence is IPIALMGKDV…RVGLNKPVRL (175 aa). An ATP-binding site is contributed by 299 to 306; the sequence is AVTGSGKT. A DEAD box motif is present at residues 408 to 411; sequence DEAD. One can recognise a Helicase C-terminal domain in the interval 490–634; sequence YLVYLCKNLY…KISSRIIDAA (145 aa). Residues 631–677 adopt a coiled-coil conformation; sequence IDAADADSWQAKIDELEDEVEAVMREEKEEKVLAQADMEMRKGENMI. The disordered stretch occupies residues 748-790; the sequence is GAAERAGKGAVLNFKKDKSSKKGPVVGGRVAKKGAPRGKPRRR. Positions 777 to 790 are enriched in basic residues; sequence VAKKGAPRGKPRRR.

This sequence belongs to the DEAD box helicase family. DDX27/DRS1 subfamily. As to quaternary structure, associates with pre-ribosomal particles.

Its subcellular location is the nucleus. The protein resides in the nucleolus. It carries out the reaction ATP + H2O = ADP + phosphate + H(+). Functionally, ATP-binding RNA helicase involved in ribosome assembly. In Pyricularia oryzae (strain 70-15 / ATCC MYA-4617 / FGSC 8958) (Rice blast fungus), this protein is ATP-dependent RNA helicase DRS1 (DRS1).